The sequence spans 421 residues: Phosphoribosylamine--glycine ligase (421 aa).

One can recognise an ATP-grasp domain in the interval 108–314; the sequence is KEIMVKYNVP…FAQNIDDIMM (207 aa). ATP is bound at residue 134 to 195; sequence IEEQGAPIVV…EEFLDGEEFS (62 aa). Mg(2+) contacts are provided by Glu-284 and Asn-286.

It belongs to the GARS family. Requires Mg(2+) as cofactor. Mn(2+) is required as a cofactor.

The catalysed reaction is 5-phospho-beta-D-ribosylamine + glycine + ATP = N(1)-(5-phospho-beta-D-ribosyl)glycinamide + ADP + phosphate + H(+). It functions in the pathway purine metabolism; IMP biosynthesis via de novo pathway; N(1)-(5-phospho-D-ribosyl)glycinamide from 5-phospho-alpha-D-ribose 1-diphosphate: step 2/2. The protein is Phosphoribosylamine--glycine ligase of Streptococcus pyogenes serotype M6 (strain ATCC BAA-946 / MGAS10394).